A 101-amino-acid chain; its full sequence is MTTNNLVLSGTITRSRRFKSPAGIAHSVIMLEHKSQRYEADMLRNVYVQIQVILSGPRFESVADNLKAGVEVQVQGFMTLQQGRNGQNRLVIHAENVELKT.

The 101-residue stretch at 1–101 folds into the SSB domain; that stretch reads MTTNNLVLSG…IHAENVELKT (101 aa).

Belongs to the PriB family. Homodimer. Interacts with PriA and DnaT. Component of the replication restart primosome. Primosome assembly occurs via a 'hand-off' mechanism. PriA binds to replication forks, subsequently PriB then DnaT bind; DnaT then displaces ssDNA to generate the helicase loading substrate.

Functionally, involved in the restart of stalled replication forks, which reloads the replicative helicase on sites other than the origin of replication; the PriA-PriB pathway is the major replication restart pathway. During primosome assembly it facilitates complex formation between PriA and DnaT on DNA; stabilizes PriA on DNA. Stimulates the DNA unwinding activity of PriA helicase. The chain is Replication restart protein PriB from Shewanella oneidensis (strain ATCC 700550 / JCM 31522 / CIP 106686 / LMG 19005 / NCIMB 14063 / MR-1).